We begin with the raw amino-acid sequence, 712 residues long: Elongation factor G (712 aa).

A tr-type G domain is found at 8-290; sequence TRYRNIGISA…AVIEFLPSPT (283 aa). GTP contacts are provided by residues 17-24, 88-92, and 142-145; these read AHIDAGKT, DTPGH, and NKMD.

This sequence belongs to the TRAFAC class translation factor GTPase superfamily. Classic translation factor GTPase family. EF-G/EF-2 subfamily.

It is found in the cytoplasm. Functionally, catalyzes the GTP-dependent ribosomal translocation step during translation elongation. During this step, the ribosome changes from the pre-translocational (PRE) to the post-translocational (POST) state as the newly formed A-site-bound peptidyl-tRNA and P-site-bound deacylated tRNA move to the P and E sites, respectively. Catalyzes the coordinated movement of the two tRNA molecules, the mRNA and conformational changes in the ribosome. The polypeptide is Elongation factor G (Acinetobacter baumannii (strain AB307-0294)).